The chain runs to 129 residues: Glycine cleavage system H protein (129 aa).

The Lipoyl-binding domain maps to 24-106 (IAVIGITAYA…YGDGWLIKVR (83 aa)). N6-lipoyllysine is present on Lys65.

The protein belongs to the GcvH family. As to quaternary structure, the glycine cleavage system is composed of four proteins: P, T, L and H. It depends on (R)-lipoate as a cofactor.

In terms of biological role, the glycine cleavage system catalyzes the degradation of glycine. The H protein shuttles the methylamine group of glycine from the P protein to the T protein. The protein is Glycine cleavage system H protein of Synechococcus sp. (strain JA-3-3Ab) (Cyanobacteria bacterium Yellowstone A-Prime).